The following is a 498-amino-acid chain: Actin-binding protein WASF2 (498 aa).

2 disordered regions span residues 173–203 (KEKR…KEEW) and 240–435 (NVDA…AVSD). The segment covering 252–263 (SDSASSPSPSFS) has biased composition (low complexity). Residues 298-407 (SHPPPAPPLG…PPPGPPPPPF (110 aa)) show a composition bias toward pro residues. One can recognise a WH2 domain in the interval 436-453 (ARSDLLSAIRQGFQLRRV). Position 474 is a phosphoserine (serine 474).

It belongs to the SCAR/WAVE family. Binds actin and the Arp2/3 complex. Interacts with BAIAP2. Component of the WAVE2 complex composed of ABI1, CYFIP1/SRA1, NCKAP1/NAP1 (NCKAP1l/HEM1 in hematopoietic cells) and WASF2/WAVE2. Directly interacts with BRK1. Interacts with FNBP1L (via the SH3 domain). As to quaternary structure, (Microbial infection) Interacts with human cytomegalovirus protein UL135. In terms of tissue distribution, expressed in all tissues with strongest expression in placenta, lung, and peripheral blood leukocytes, but not in skeletal muscle.

It is found in the cytoplasm. It localises to the cytoskeleton. Its subcellular location is the cell projection. The protein localises to the lamellipodium. The protein resides in the basolateral cell membrane. Its function is as follows. Downstream effector molecule involved in the transmission of signals from tyrosine kinase receptors and small GTPases to the actin cytoskeleton. Promotes formation of actin filaments. Part of the WAVE complex that regulates lamellipodia formation. The WAVE complex regulates actin filament reorganization via its interaction with the Arp2/3 complex. The polypeptide is Actin-binding protein WASF2 (Homo sapiens (Human)).